Consider the following 198-residue polypeptide: dITP/XTP pyrophosphatase (198 aa).

7-12 lines the substrate pocket; sequence TRNAGK. Residues Glu-40 and Asp-69 each coordinate Mg(2+). The active-site Proton acceptor is Asp-69. Residues Ser-70, 152 to 155, Lys-175, and 180 to 181 each bind substrate; these read FGYD and HR.

This sequence belongs to the HAM1 NTPase family. In terms of assembly, homodimer. The cofactor is Mg(2+).

It carries out the reaction XTP + H2O = XMP + diphosphate + H(+). It catalyses the reaction dITP + H2O = dIMP + diphosphate + H(+). The catalysed reaction is ITP + H2O = IMP + diphosphate + H(+). In terms of biological role, pyrophosphatase that catalyzes the hydrolysis of nucleoside triphosphates to their monophosphate derivatives, with a high preference for the non-canonical purine nucleotides XTP (xanthosine triphosphate), dITP (deoxyinosine triphosphate) and ITP. Seems to function as a house-cleaning enzyme that removes non-canonical purine nucleotides from the nucleotide pool, thus preventing their incorporation into DNA/RNA and avoiding chromosomal lesions. The protein is dITP/XTP pyrophosphatase of Exiguobacterium sibiricum (strain DSM 17290 / CCUG 55495 / CIP 109462 / JCM 13490 / 255-15).